The sequence spans 153 residues: Pheromone-binding protein Gp-9 (153 aa).

An N-terminal signal peptide occupies residues 1 to 19 (MKTFVLHIFIFALVAFASA). 3 disulfide bridges follow: Cys37/Cys77, Cys73/Cys129, and Cys118/Cys138.

The protein belongs to the PBP/GOBP family. In terms of assembly, homodimer.

It localises to the secreted. In terms of biological role, colony queen number, a major feature of social organization, is associated with worker genotype for Gp-9. Colonies are headed by either a single reproductive queen (monogyne form) or multiple queens (polygyne form). Differences in worker Gp-9 genotypes between social forms may cause differences in workers' abilities to recognize queens and regulate their numbers. This chain is Pheromone-binding protein Gp-9, found in Solenopsis invicta (Red imported fire ant).